The chain runs to 317 residues: Periplasmic [NiFe] hydrogenase small subunit 1 (317 aa).

Residues 1-49 (MRFSVGLGKEGAEERLARRGVSRRDFLKFCTAIAVTMGMGPAFAPEVAR) constitute a signal peptide (tat-type signal). Residues Cys67, Cys70, Cys164, Cys200, His238, Cys241, Cys266, and Cys272 each coordinate [4Fe-4S] cluster. The [3Fe-4S] cluster site is built by Cys281, Cys299, and Cys302.

Belongs to the [NiFe]/[NiFeSe] hydrogenase small subunit family. In terms of assembly, heterodimer of a large and a small subunit. It depends on [3Fe-4S] cluster as a cofactor. [4Fe-4S] cluster serves as cofactor. Predicted to be exported by the Tat system. The position of the signal peptide cleavage has not been experimentally proven.

It is found in the periplasm. The catalysed reaction is 2 Fe(III)-[cytochrome c3] + H2 = 2 Fe(II)-[cytochrome c3] + 2 H(+). In Nitratidesulfovibrio vulgaris (strain ATCC 29579 / DSM 644 / CCUG 34227 / NCIMB 8303 / VKM B-1760 / Hildenborough) (Desulfovibrio vulgaris), this protein is Periplasmic [NiFe] hydrogenase small subunit 1 (hynB1).